Reading from the N-terminus, the 106-residue chain is MNDSEFHRLADQLWLTIEERLDDWDGDSDIDCEINGGVLTITFENGSKIIINRQEPLHQVWLATKQGGYHFDMKGDEWICDRSGETFWDLLEQAATQQAGETVSFR.

Belongs to the frataxin family.

Involved in iron-sulfur (Fe-S) cluster assembly. May act as a regulator of Fe-S biogenesis. This is Iron-sulfur cluster assembly protein CyaY from Escherichia coli (strain SMS-3-5 / SECEC).